A 187-amino-acid polypeptide reads, in one-letter code: Elongation factor P (187 aa).

It belongs to the elongation factor P family.

The protein resides in the cytoplasm. It functions in the pathway protein biosynthesis; polypeptide chain elongation. Its function is as follows. Involved in peptide bond synthesis. Stimulates efficient translation and peptide-bond synthesis on native or reconstituted 70S ribosomes in vitro. Probably functions indirectly by altering the affinity of the ribosome for aminoacyl-tRNA, thus increasing their reactivity as acceptors for peptidyl transferase. In Mycobacterium ulcerans (strain Agy99), this protein is Elongation factor P.